We begin with the raw amino-acid sequence, 760 residues long: MVNAGAMSGSGNLMDFLDEPFPDVGTYEDFHTIDWLREKSRDTDRHRKITSKSKESIWEFIKSLLDAWSGWVVMLLIGLLAGTLAGVIDLAVDWMTDLKEGVCLSAFWYSHEQCCWTSNETTFEDRDKCPLWQKWSELLVNQSEGASAYILNYLMYILWALLFAFLAVSLVRVFAPYACGSGIPEIKTILSGFIIRGYLGKWTLLIKTVTLVLVVSSGLSLGKEGPLVHVACCCGNFFSSLFSKYSKNEGKRREVLSAAAAAGVSVAFGAPIGGVLFSLEEVSYYFPLKTLWRSFFAALVAAFTLRSINPFGNSRLVLFYVEYHTPWYMAELFPFILLGVFGGLWGTLFIRCNIAWCRRRKTTRLGKYPVLEVIVVTAITAIIAYPNPYTRQSTSELISELFNDCGALESSQLCDYINDPNMTRPVDDIPDRPAGVGVYTAMWQLALALIFKIVVTIFTFGMKIPSGLFIPSMAVGAIAGRMVGIGVEQLAYHHHDWIIFRNWCRPGADCVTPGLYAMVGAAACLGGVTRMTVSLVVIMFELTGGLEYIVPLMAAAVTSKWVADAFGKEGIYEAHIHLNGYPFLDVKDEFTHRTLATDVMRPRRGEPPLSVLTQDSMTVEDVETLIKETDYNGFPVVVSRDSERLIGFAQRRELILAIKNARQRQEGIVSNSIMYFTEEPPELPANSPHPLKLRRILNLSPFTVTDHTPMETVVDIFRKLGLRQCLVTRSGRLLGIITKKDVLRHMAQMANQDPESIMFN.

Topologically, residues 1-67 (MVNAGAMSGS…WEFIKSLLDA (67 aa)) are cytoplasmic. The tract at residues 14 to 63 (MDFLDEPFPDVGTYEDFHTIDWLREKSRDTDRHRKITSKSKESIWEFIKS) is required for localization in the endoplasmic reticulum. The next 2 helical transmembrane spans lie at 68–105 (WSGW…VCLS) and 151–174 (LNYL…VRVF). Positions 180–184 (GSGIP) match the Selectivity filter part_1 motif. Ser181 lines the chloride pocket. An intramembrane region (helical) is located at residues 183–190 (IPEIKTIL). 2 helical membrane-spanning segments follow: residues 200 to 218 (GKWT…VSSG) and 224 to 243 (EGPL…SLFS). The Selectivity filter part_2 motif lies at 222-226 (GKEGP). Intramembrane regions (helical) lie at residues 255–267 (VLSA…VSVA) and 271–279 (PIGGVLFSL). The next 5 helical transmembrane spans lie at 291–309 (LWRS…RSIN), 333–358 (FPFI…AWCR), 365–385 (LGKY…IIAY), 442–462 (MWQL…TFGM), and 467–486 (GLFI…VGIG). Positions 467 to 471 (GLFIP) match the Selectivity filter part_3 motif. Residue Phe469 coordinates chloride. 2 intramembrane regions (helical) span residues 514-528 (GLYA…LGGV) and 532-543 (TVSLVVIMFELT). An intramembrane region (note=Loop between two helices) is located at residues 544–547 (GGLE). The chain crosses the membrane as a helical span at residues 548–566 (YIVPLMAAAVTSKWVADAF). Residues 567–760 (GKEGIYEAHI…NQDPESIMFN (194 aa)) are Cytoplasmic-facing. A chloride-binding site is contributed by Tyr572. In terms of domain architecture, CBS 1 spans 600 to 666 (MRPRRGEPPL…AIKNARQRQE (67 aa)). Residues Ser610 and 631-633 (YNG) each bind ATP. Residues 667–696 (GIVSNSIMYFTEEPPELPANSPHPLKLRRI) are required for localization in the endoplasmic reticulum. The region spanning 697-755 (LNLSPFTVTDHTPMETVVDIFRKLGLRQCLVTRSGRLLGIITKKDVLRHMAQMANQDPE) is the CBS 2 domain. An ATP-binding site is contributed by 738-741 (TKKD).

This sequence belongs to the chloride channel (TC 2.A.49) family. ClC-4/CLCN4 subfamily. As to quaternary structure, monomer. Forms heterodimers with CLCN3. In terms of tissue distribution, abundant in skeletal muscle and also detectable in brain and heart.

Its subcellular location is the early endosome membrane. It is found in the late endosome membrane. It localises to the endoplasmic reticulum membrane. The protein resides in the lysosome membrane. The protein localises to the recycling endosome membrane. In terms of biological role, strongly outwardly rectifying, electrogenic H(+)/Cl(-)exchanger which mediates the exchange of chloride ions against protons. The CLC channel family contains both chloride channels and proton-coupled anion transporters that exchange chloride or another anion for protons. The presence of conserved gating glutamate residues is typical for family members that function as antiporters. In Homo sapiens (Human), this protein is H(+)/Cl(-) exchange transporter 4 (CLCN4).